A 152-amino-acid chain; its full sequence is UPF0266 membrane protein YobD (152 aa).

Helical transmembrane passes span 6–26, 45–65, and 67–87; these read LVLILFIAALLAYALYDQFIM, VDSVIFVGLVAILIYNNVTSH, and AQMTTWLLSALALMGFYIFWI.

The protein belongs to the UPF0266 family.

It is found in the cell inner membrane. The polypeptide is UPF0266 membrane protein YobD (Salmonella arizonae (strain ATCC BAA-731 / CDC346-86 / RSK2980)).